Reading from the N-terminus, the 250-residue chain is Agamous-like MADS-box protein AGL9 homolog (250 aa).

The MADS-box domain occupies 3 to 57; sequence RGRVELKMIENKINRQVTFAKRRKRLLKKAYELSVLCDAEVALIIFSNRGKLYEF. In terms of domain architecture, K-box spans 87–177; it reads TQSSQQEYLK…KRRFEESSQA (91 aa).

As to expression, expressed in petals and weakly in sepals but not in the column (gynostemium).

It is found in the nucleus. Functionally, probable transcription factor active in inflorescence development and floral organogenesis. The protein is Agamous-like MADS-box protein AGL9 homolog of Aranda deborah (Orchid).